Reading from the N-terminus, the 417-residue chain is NADH-quinone oxidoreductase subunit D (417 aa).

Belongs to the complex I 49 kDa subunit family. As to quaternary structure, NDH-1 is composed of 14 different subunits. Subunits NuoB, C, D, E, F, and G constitute the peripheral sector of the complex.

Its subcellular location is the cell inner membrane. The catalysed reaction is a quinone + NADH + 5 H(+)(in) = a quinol + NAD(+) + 4 H(+)(out). Functionally, NDH-1 shuttles electrons from NADH, via FMN and iron-sulfur (Fe-S) centers, to quinones in the respiratory chain. The immediate electron acceptor for the enzyme in this species is believed to be ubiquinone. Couples the redox reaction to proton translocation (for every two electrons transferred, four hydrogen ions are translocated across the cytoplasmic membrane), and thus conserves the redox energy in a proton gradient. The polypeptide is NADH-quinone oxidoreductase subunit D (Ruthia magnifica subsp. Calyptogena magnifica).